The sequence spans 276 residues: Zinc transporter ZTP29 (276 aa).

Over 1–6 (MDSQML) the chain is Cytoplasmic. The chain crosses the membrane as a helical span at residues 7–27 (VALGLSLVGGLSTSLGALFVV). Residues 28 to 35 (LSETPNMK) lie on the Lumenal side of the membrane. The helical transmembrane segment at 36–56 (MLGLLQGFASGLMLSISFLDL) threads the bilayer. Over 57–63 (AHNAINS) the chain is Cytoplasmic. A helical transmembrane segment spans residues 64–84 (IGFFKANLWFFGGVIFFACIT). Topologically, residues 85–123 (KFIPEPTLGPSTDGKRRKKNGDEGGKDMMKKHRKQVLYS) are lumenal. The helical transmembrane segment at 124–144 (GLITAIGISLHNFPEGMAVFL) threads the bilayer. At 145-156 (GSIKGMRVGVNL) the chain is on the cytoplasmic side. A helical membrane pass occupies residues 157 to 177 (ALAIALHNIPEGVAVALPIYF). Residues 178–187 (ATESKWQAFK) lie on the Lumenal side of the membrane. The helical transmembrane segment at 188-208 (LATLSGLAEPLGVIIVAYLFP) threads the bilayer. Residues 209–219 (RSLSPEILEGL) are Cytoplasmic-facing. A helical membrane pass occupies residues 220 to 240 (LGAVGGIMAFLTLHEMLPLAF). Residues 241–250 (DYAGQKQAVK) are Lumenal-facing. Residues 251–271 (AVFFGMACMSASLYFLELSLP) traverse the membrane as a helical segment. The Cytoplasmic segment spans residues 272–276 (ETMSL).

It belongs to the ZIP transporter (TC 2.A.5) family. ZupT subfamily. As to expression, expressed in hypocotyls, cotyledons, leaves and anthers.

It localises to the endoplasmic reticulum membrane. Functionally, zinc transporter involved response to salt stress. May act through the regulation of zinc levels required to induce the unfolded protein response (UPR) pathway. The chain is Zinc transporter ZTP29 (ZTP29) from Arabidopsis thaliana (Mouse-ear cress).